The primary structure comprises 98 residues: Omega-hexatoxin-Hr2b (98 aa).

The signal sequence occupies residues M1–C22. Positions K24 to R56 are excised as a propeptide. Cystine bridges form between C60–C74, C67–C80, and C73–C85. Leucine amide is present on L97.

Belongs to the neurotoxin 15 family. 02 (omega-actx) subfamily. In terms of tissue distribution, expressed by the venom gland.

It is found in the secreted. Its function is as follows. Potent inhibitor of insect, but not mammalian, voltage-gated calcium channels (Cav). The sequence is that of Omega-hexatoxin-Hr2b from Atrax robustus (Sydney funnel-web spider).